A 276-amino-acid chain; its full sequence is MAIKKYKPTSNGRRGMTVLDFSEITTDQPEKSLLAPLKKRAGRNNQGKITVRHQGGGHKRQYRIIDFKRDKDGIPGRVATIEYDPNRSANIALINYADGEKRYIIAPKNLKVGMEIMSGPDADIKIGNALPLENIPVGTLVHNIELKPGRGGQLVRAAGTSAQVLGKEGKYVIVRLASGEVRMILGKCRATVGEVGNEQHELVNIGKAGRARWLGIRPTVRGSVMNPVDHPHGGGEGKAPIGRKSPMTPWGKPTLGYKTRKKKNKSDKFIIRRRKK.

Positions 224 to 276 (VMNPVDHPHGGGEGKAPIGRKSPMTPWGKPTLGYKTRKKKNKSDKFIIRRRKK) are disordered. A compositionally biased stretch (basic residues) spans 258 to 276 (KTRKKKNKSDKFIIRRRKK).

This sequence belongs to the universal ribosomal protein uL2 family. As to quaternary structure, part of the 50S ribosomal subunit. Forms a bridge to the 30S subunit in the 70S ribosome.

Functionally, one of the primary rRNA binding proteins. Required for association of the 30S and 50S subunits to form the 70S ribosome, for tRNA binding and peptide bond formation. It has been suggested to have peptidyltransferase activity; this is somewhat controversial. Makes several contacts with the 16S rRNA in the 70S ribosome. This Geobacillus stearothermophilus (Bacillus stearothermophilus) protein is Large ribosomal subunit protein uL2.